Reading from the N-terminus, the 263-residue chain is ATP synthase subunit a (263 aa).

5 helical membrane-spanning segments follow: residues 31 to 51 (LDTL…FYSI), 89 to 109 (IGSL…MDLI), 133 to 153 (DPNA…VYTF), 205 to 225 (LFGN…LPFW), and 235 to 255 (AIFH…LTIV).

It belongs to the ATPase A chain family. As to quaternary structure, F-type ATPases have 2 components, CF(1) - the catalytic core - and CF(0) - the membrane proton channel. CF(1) has five subunits: alpha(3), beta(3), gamma(1), delta(1), epsilon(1). CF(0) has three main subunits: a(1), b(2) and c(9-12). The alpha and beta chains form an alternating ring which encloses part of the gamma chain. CF(1) is attached to CF(0) by a central stalk formed by the gamma and epsilon chains, while a peripheral stalk is formed by the delta and b chains.

It is found in the cell inner membrane. Its function is as follows. Key component of the proton channel; it plays a direct role in the translocation of protons across the membrane. The protein is ATP synthase subunit a of Dichelobacter nodosus (strain VCS1703A).